Here is a 1080-residue protein sequence, read N- to C-terminus: AP-4 complex subunit epsilon (1080 aa).

5 HEAT repeats span residues 161–198 (DTIP…LVGD), 201–238 (LDDD…KHST), 369–405 (QLIE…KVSP), 406–443 (KLVL…QTNV), and 445–479 (PVCS…KYSP). Disordered stretches follow at residues 711-782 (TPLV…FPQQ), 801-920 (NNNS…NIDP), 933-973 (FSEN…INNN), and 996-1027 (TNNS…NNNL). Composition is skewed to low complexity over residues 762–782 (QQQQ…FPQQ), 801–847 (NNNS…PNNQ), 878–911 (NKQT…IQKH), 936–952 (NNNR…NQNN), and 962–972 (KKSNNENNINN).

It belongs to the adaptor complexes large subunit family. May be part of the adaptor protein complex 4 (AP-4), a heterotetramer composed of two large adaptins (epsilon-type subunitand beta-type subunit), a medium adaptin (mu-type subunit) and a small adaptin (sigma-type).

The protein localises to the golgi apparatus. It localises to the trans-Golgi network membrane. Functionally, probable component of an adaptor protein complex. Adaptor protein complexes are vesicle coat components involved both in vesicle formation and cargo selection. They control the vesicular transport of proteins in different trafficking pathways. This chain is AP-4 complex subunit epsilon, found in Dictyostelium discoideum (Social amoeba).